We begin with the raw amino-acid sequence, 382 residues long: Pentraxin-related protein PTX3 (382 aa).

Positions 1–17 are cleaved as a signal peptide; the sequence is MHISVILFCALWSAVSA. The stretch at 79–137 forms a coiled coil; the sequence is VMLRGELQKLQAELGRLEGSLQKLCGPEAPSETRLARALDDLLQASRDAGRRLARLEDA. Cystine bridges form between Cys-180–Cys-358 and Cys-211–Cys-272. The Pentraxin (PTX) domain occupies 180-382; sequence CETAILFPMR…QPHGGAQYVY (203 aa). Asn-221 carries N-linked (GlcNAc...) asparagine glycosylation.

Homooctamer; disulfide-linked. Binds to C1q.

The protein localises to the secreted. Functionally, plays a role in the regulation of innate resistance to pathogens, inflammatory reactions, possibly clearance of self-components and female fertility. The sequence is that of Pentraxin-related protein PTX3 (PTX3) from Bos taurus (Bovine).